A 355-amino-acid polypeptide reads, in one-letter code: Ubiquinone biosynthesis protein COQ4 homolog, mitochondrial (355 aa).

Positions 134, 135, 138, and 150 each coordinate Zn(2+).

Belongs to the COQ4 family. As to quaternary structure, component of a multi-subunit COQ enzyme complex. It depends on Zn(2+) as a cofactor.

The protein resides in the mitochondrion inner membrane. The enzyme catalyses a 4-hydroxy-3-methoxy-5-(all-trans-polyprenyl)benzoate + H(+) = a 2-methoxy-6-(all-trans-polyprenyl)phenol + CO2. It functions in the pathway cofactor biosynthesis; ubiquinone biosynthesis. In terms of biological role, lyase that catalyzes the C1-decarboxylation of 4-hydroxy-3-methoxy-5-(all-trans-polyprenyl)benzoic acid into 2-methoxy-6-(all-trans-polyprenyl)phenol during ubiquinone biosynthesis. The polypeptide is Ubiquinone biosynthesis protein COQ4 homolog, mitochondrial (Plasmodium chabaudi chabaudi).